Here is a 122-residue protein sequence, read N- to C-terminus: Small ribosomal subunit protein bS6 (122 aa).

It belongs to the bacterial ribosomal protein bS6 family.

Binds together with bS18 to 16S ribosomal RNA. The chain is Small ribosomal subunit protein bS6 from Neisseria meningitidis serogroup C (strain 053442).